We begin with the raw amino-acid sequence, 332 residues long: Long form salivary protein D7L2 (332 aa).

A signal peptide spans Met-1–Ala-21. Intrachain disulfides connect Cys-40-Cys-77 and Cys-73-Cys-133. Trp-61 lines the leukotriene E4 pocket. Residues Gly-157 and Lys-176 each contribute to the leukotriene E4 site. 3 disulfides stabilise this stretch: Cys-184-Cys-219, Cys-200-Cys-331, and Cys-259-Cys-278. Residues Glu-185, Arg-203, and His-216 each coordinate noradrenaline. Noradrenaline contacts are provided by Asp-294 and Glu-297.

This sequence belongs to the PBP/GOBP family. As to quaternary structure, interacts with human CD4. In terms of tissue distribution, saliva (at protein level). Female salivary gland (at protein level). Detected in the head and thorax of the female mosquitoes, where the salivary glands are located.

It is found in the secreted. In terms of biological role, modulates blood feeding of female mosquitoes on vertebrate species by binding and sequestering different mediators involved in the host response, such as biogenic amines and eicosanoids. Binds serotonin, histamine, tryptamine, noradrenaline, leukotriene B4, leukotriene C4, leukotriene D4, leukotriene E4 and U-46619, a stable analog of thromboxane A2. Does not bind adrenaline. Exhibits vasodilating activity. Inhibits agonist-induced platelet aggregation but not blood clotting. Functionally, (Microbial infection) Probably promotes Plasmodium gallinaceum oocyst development in mosquito midgut. The chain is Long form salivary protein D7L2 from Aedes aegypti (Yellowfever mosquito).